Here is a 185-residue protein sequence, read N- to C-terminus: Protein LURP-one-related 13 (185 aa).

The protein belongs to the LOR family.

Its function is as follows. Might be related to the phospholipid scramblase and tubby-like superfamily of membrane tethered transcription factors. In Arabidopsis thaliana (Mouse-ear cress), this protein is Protein LURP-one-related 13.